The chain runs to 183 residues: Adenine phosphoribosyltransferase (183 aa).

This sequence belongs to the purine/pyrimidine phosphoribosyltransferase family. Homodimer.

It localises to the cytoplasm. It carries out the reaction AMP + diphosphate = 5-phospho-alpha-D-ribose 1-diphosphate + adenine. It functions in the pathway purine metabolism; AMP biosynthesis via salvage pathway; AMP from adenine: step 1/1. In terms of biological role, catalyzes a salvage reaction resulting in the formation of AMP, that is energically less costly than de novo synthesis. The protein is Adenine phosphoribosyltransferase of Shewanella piezotolerans (strain WP3 / JCM 13877).